We begin with the raw amino-acid sequence, 147 residues long: Molybdopterin synthase catalytic subunit 1 (147 aa).

Residues 43-45 (NVR), 109-110 (HR), lysine 125, and 132-134 (KKE) contribute to the substrate site.

Belongs to the MoaE family. In terms of assembly, heterotetramer of 2 MoaD subunits and 2 MoaE subunits. Also stable as homodimer. The enzyme changes between these two forms during catalysis.

It carries out the reaction 2 [molybdopterin-synthase sulfur-carrier protein]-C-terminal-Gly-aminoethanethioate + cyclic pyranopterin phosphate + H2O = molybdopterin + 2 [molybdopterin-synthase sulfur-carrier protein]-C-terminal Gly-Gly + 2 H(+). It participates in cofactor biosynthesis; molybdopterin biosynthesis. Functionally, converts molybdopterin precursor Z into molybdopterin. This requires the incorporation of two sulfur atoms into precursor Z to generate a dithiolene group. The sulfur is provided by MoaD. The protein is Molybdopterin synthase catalytic subunit 1 (moaE1) of Mycobacterium tuberculosis (strain ATCC 25618 / H37Rv).